The following is a 331-amino-acid chain: DNA-directed RNA polymerase subunit alpha (331 aa).

The tract at residues 1 to 242 (MEKFLRYNIQ…EHYKPIVTEL (242 aa)) is alpha N-terminal domain (alpha-NTD). The interval 258–331 (VSSSKSSLAI…RNLKLKEEQN (74 aa)) is alpha C-terminal domain (alpha-CTD).

The protein belongs to the RNA polymerase alpha chain family. As to quaternary structure, homodimer. The RNAP catalytic core consists of 2 alpha, 1 beta, 1 beta' and 1 omega subunit. When a sigma factor is associated with the core the holoenzyme is formed, which can initiate transcription.

It catalyses the reaction RNA(n) + a ribonucleoside 5'-triphosphate = RNA(n+1) + diphosphate. Functionally, DNA-dependent RNA polymerase catalyzes the transcription of DNA into RNA using the four ribonucleoside triphosphates as substrates. The chain is DNA-directed RNA polymerase subunit alpha from Malacoplasma penetrans (strain HF-2) (Mycoplasma penetrans).